The primary structure comprises 251 residues: Imidazole glycerol phosphate synthase subunit HisF (251 aa).

Active-site residues include aspartate 11 and aspartate 130.

It belongs to the HisA/HisF family. In terms of assembly, heterodimer of HisH and HisF.

It localises to the cytoplasm. It catalyses the reaction 5-[(5-phospho-1-deoxy-D-ribulos-1-ylimino)methylamino]-1-(5-phospho-beta-D-ribosyl)imidazole-4-carboxamide + L-glutamine = D-erythro-1-(imidazol-4-yl)glycerol 3-phosphate + 5-amino-1-(5-phospho-beta-D-ribosyl)imidazole-4-carboxamide + L-glutamate + H(+). It functions in the pathway amino-acid biosynthesis; L-histidine biosynthesis; L-histidine from 5-phospho-alpha-D-ribose 1-diphosphate: step 5/9. In terms of biological role, IGPS catalyzes the conversion of PRFAR and glutamine to IGP, AICAR and glutamate. The HisF subunit catalyzes the cyclization activity that produces IGP and AICAR from PRFAR using the ammonia provided by the HisH subunit. The polypeptide is Imidazole glycerol phosphate synthase subunit HisF (Pelodictyon phaeoclathratiforme (strain DSM 5477 / BU-1)).